The primary structure comprises 677 residues: Envelope glycoprotein (677 aa).

Residues 1–33 form the signal peptide; it reads MGSGYQLLQLPRERFRKTSFLVWVIILFQRAIS. Topologically, residues 34–651 are extracellular; sequence MPLGIVTNST…DLNLWTGWRQ (618 aa). N-linked (GlcNAc...) asparagine; by host glycosylation occurs at Asn41. Intrachain disulfides connect Cys54-Cys610, Cys109-Cys136, Cys122-Cys148, Cys512-Cys557, and Cys602-Cys609. The segment at 55–202 is receptor-binding; it reads RDKLSSTSQL…HFWKATPAHE (148 aa). N-linked (GlcNAc...) asparagine; by host glycans are attached at residues Asn205, Asn239, Asn258, Asn269, Asn297, Asn317, Asn318, Asn339, Asn406, Asn420, Asn435, and Asn463. The tract at residues 306–486 is mucin-like region; the sequence is NLHFQILSTH…PSQPGFTINT (181 aa). Over residues 315-326 the composition is skewed to polar residues; it reads HTNNSSDQSPAG. Disordered regions lie at residues 315–349, 370–482, and 489–508; these read HTNN…TDSP, NGET…QPGF, and KVAD…RQNT. Polar residues-rich tracts occupy residues 370 to 421 and 429 to 472; these read NGET…ASNE and NPIQ…TSPG. Residues 525–540 are fusion peptide; that stretch reads GAAVGLAWIPYFGPAA. Positions 555 to 596 form a coiled coil; it reads LICGLRQLANETTQALQLFLRATTELRTYSLLNRKAIDFLLQ. N-linked (GlcNAc...) asparagine; by host glycosylation occurs at Asn564. A coiled-coil region spans residues 616 to 635; that stretch reads WTKNITDEINQIKHDFIDNP. N-linked (GlcNAc...) asparagine; by host glycosylation occurs at Asn619. The chain crosses the membrane as a helical span at residues 652 to 672; sequence WIPAGIGIIGVIIAIIALLCI. Residues Cys671 and Cys673 are each lipidated (S-palmitoyl cysteine; by host). Topologically, residues 673-677 are cytoplasmic; that stretch reads CKILC.

Belongs to the filoviruses glycoprotein family. In terms of assembly, homotrimer; each monomer consists of a GP1 and a GP2 subunit linked by disulfide bonds. The resulting peplomers (GP1,2) protrude from the virus surface as spikes. Interacts with host integrin alpha-V/ITGAV. Interacts with host CLEC10A. Binds also to host CD209 and CLEC4M/DC-SIGN(R). Interacts with host FOLR1. Interacts with BST2; this interaction inhibits the antiviral effect of BST2 and this allows viral release from infected cells. Interacts with host FCN1; this interaction enhances viral entry. Interacts with host TLR4; this interaction induces cell death in T-lymphocytes or proinflammatory cytokines and SOCS1 production in monocytes. As to quaternary structure, interacts with host entry receptor NPC1. GP1 and GP2delta are part of GP1,2delta soluble complexes released by ectodomain shedding. In terms of processing, the signal peptide region modulates GP's high mannose glycosylation, thereby determining the efficiency of the interactions with DC-SIGN(R). Post-translationally, N-glycosylated. O-glycosylated in the mucin-like region. In terms of processing, palmitoylation of GP2 is not required for its function. Post-translationally, specific enzymatic cleavages in vivo yield mature proteins. The precursor is processed into GP1 and GP2 by host cell furin in the trans Golgi, and maybe by other host proteases, to yield the mature GP1 and GP2 proteins. The cleavage site corresponds to the furin optimal cleavage sequence [KR]-X-[KR]-R. This cleavage does not seem to be required for function. After the internalization of the virus into cell endosomes, GP1 C-terminus is removed by the endosomal proteases cathepsin B, cathepsin L, or both, leaving a 19-kDa N-terminal fragment which is further digested by cathepsin B. Proteolytic processing of GP1,2 by host ADAM17 can remove the transmembrane anchor of GP2 and leads to shedding of complexes consisting in GP1 and truncated GP2 (GP1,2delta).

The protein localises to the virion membrane. The protein resides in the host cell membrane. It localises to the secreted. Its function is as follows. Trimeric GP1,2 complexes form the virion surface spikes and mediate the viral entry processes, with GP1 acting as the receptor-binding subunit and GP2 as the membrane fusion subunit. At later times of infection, down-regulates the expression of various host cell surface molecules that are essential for immune surveillance and cell adhesion. Down-modulates several integrins including ITGA1, ITGA2, ITGA3, ITGA4, ITGA5, ITGA6, ITGAV and ITGB1. This decrease in cell adhesion molecules may lead to cell detachment, contributing to the disruption of blood vessel integrity and hemorrhages developed during infection (cytotoxicity). Interacts with host TLR4 and thereby stimulates the differentiation and activation of monocytes leading to bystander death of T-lymphocytes. Down-regulates as well the function of host natural killer cells. Counteracts the antiviral effect of host BST2/tetherin that restricts release of progeny virions from infected cells. However, cooperates with VP40 and host BST2 to activate canonical NF-kappa-B pathway in a manner dependent on neddylation. Functions as a decoy for anti-GP1,2 antibodies thereby contributing to viral immune evasion. Interacts and activates host macrophages and dendritic cells inducing up-regulation of cytokine transcription. This effect is mediated throught activation of host TLR4. In terms of biological role, responsible for binding to the receptor(s) on target cells. Interacts with CD209/DC-SIGN and CLEC4M/DC-SIGNR which act as cofactors for virus entry into dendritic cells (DCs) and endothelial cells. Binding to the macrophage specific lectin CLEC10A also seems to enhance virus infectivity. Interaction with FOLR1/folate receptor alpha may be a cofactor for virus entry in some cell types, although results are contradictory. Members of the Tyro3 receptor tyrosine kinase family also seem to be cell entry factors in filovirus infection. Once attached, the virions are internalized through clathrin-dependent endocytosis and/or macropinocytosis. After internalization of the virus into the endosomes of the host cell, proteolysis of GP1 by two cysteine proteases, CTSB/cathepsin B and CTSL/cathepsin L removes the glycan cap and allows GP1 binding to the host entry receptor NPC1. NPC1-binding, Ca(2+) and acidic pH induce a conformational change of GP2, which unmasks its fusion peptide and permit membranes fusion. Functionally, acts as a class I viral fusion protein. Under the current model, the protein has at least 3 conformational states: pre-fusion native state, pre-hairpin intermediate state, and post-fusion hairpin state. During viral and target cell membrane fusion, the coiled coil regions (heptad repeats) assume a trimer-of-hairpins structure, positioning the fusion peptide in close proximity to the C-terminal region of the ectodomain. The formation of this structure appears to drive apposition and subsequent fusion of viral and target cell membranes. Responsible for penetration of the virus into the cell cytoplasm by mediating the fusion of the membrane of the endocytosed virus particle with the endosomal membrane. Low pH in endosomes induces an irreversible conformational change in GP2, releasing the fusion hydrophobic peptide. The polypeptide is Envelope glycoprotein (GP) (Homo sapiens (Human)).